Consider the following 149-residue polypeptide: Probable flagellum biosynthesis repressor protein FlbT (149 aa).

It belongs to the FlbT family.

Has a post-transcriptional repressor function in flagellum biogenesis. Associates with the 5'-UTR of fljK mRNA and promotes its degradation. The chain is Probable flagellum biosynthesis repressor protein FlbT from Rhizobium leguminosarum bv. trifolii (strain WSM2304).